Consider the following 755-residue polypeptide: uncharacterized protein (755 aa).

Disordered stretches follow at residues 1-44, 72-91, 99-174, 393-467, 523-545, 584-672, and 734-755; these read MAAP…AAAQ, AEHS…ATAQ, FSLS…IPHY, TTNV…SSSR, LPKT…EGGG, VSSS…LPSG, and QAAT…PRRK. Low complexity-rich tracts occupy residues 10 to 25 and 35 to 44; these read TTTQ…TTTT and TTTGSGAAAQ. Composition is skewed to low complexity over residues 112–130, 139–151, and 393–412; these read ISSS…NASS, SPDL…LSGS, and TTNV…TKST. The span at 429–446 shows a compositional bias: acidic residues; sequence IEEDTIQFDDPGQGEDDN. The span at 452–462 shows a compositional bias: pro residues; sequence NTPPPPGPPPN. Residues 536–545 show a composition bias toward gly residues; sequence ATGGVTEGGG. Residues 590-599 show a composition bias toward polar residues; the sequence is LPQPQVATTI. Composition is skewed to low complexity over residues 600–666 and 740–755; these read TPQA…QTPQ and SQPS…PRRK.

The protein belongs to the chlamydial CPn_0572/CT_456/TC_0741 family.

This is an uncharacterized protein from Chlamydia pneumoniae (Chlamydophila pneumoniae).